Consider the following 395-residue polypeptide: NAD(P)H-quinone oxidoreductase subunit H (395 aa).

This sequence belongs to the complex I 49 kDa subunit family. In terms of assembly, NDH-1 can be composed of about 15 different subunits; different subcomplexes with different compositions have been identified which probably have different functions.

Its subcellular location is the cellular thylakoid membrane. It carries out the reaction a plastoquinone + NADH + (n+1) H(+)(in) = a plastoquinol + NAD(+) + n H(+)(out). The enzyme catalyses a plastoquinone + NADPH + (n+1) H(+)(in) = a plastoquinol + NADP(+) + n H(+)(out). Functionally, NDH-1 shuttles electrons from an unknown electron donor, via FMN and iron-sulfur (Fe-S) centers, to quinones in the respiratory and/or the photosynthetic chain. The immediate electron acceptor for the enzyme in this species is believed to be plastoquinone. Couples the redox reaction to proton translocation, and thus conserves the redox energy in a proton gradient. Cyanobacterial NDH-1 also plays a role in inorganic carbon-concentration. The protein is NAD(P)H-quinone oxidoreductase subunit H of Prochlorococcus marinus (strain MIT 9312).